The chain runs to 698 residues: Voltage-dependent calcium channel beta subunit-associated regulatory protein (698 aa).

Over 1 to 41 (MQPTATMATAAATTATVALTTSWDNATSRPTAEPDPILDNY) the chain is Extracellular. An N-linked (GlcNAc...) asparagine glycan is attached at N25. The chain crosses the membrane as a helical; Signal-anchor for type III membrane protein span at residues 42 to 62 (VLLVVVMSLFVGGTLVVLSGV). At 63–698 (LLLCKRCWEV…APTSPDHSPA (636 aa)) the chain is on the cytoplasmic side. Disordered regions lie at residues 90-124 (YLDN…TSST) and 185-275 (ASAA…SSGS). Residues 185-197 (ASAAATPHPATTS) show a composition bias toward low complexity. S290 and S295 each carry phosphoserine. Disordered stretches follow at residues 308-339 (SQRA…EQEG), 360-421 (PPPR…HAQC), 438-536 (ATAS…RRDY), and 554-648 (PHFD…GSGL). Residues 360 to 375 (PPPRPFLASPTSPPPT) are compositionally biased toward pro residues. A compositionally biased stretch (low complexity) spans 402–413 (PEHAQQQDPQQE). Gly residues predominate over residues 459–468 (SGSGSGGGGA). The span at 471-482 (AFPPPPESPPAL) shows a compositional bias: pro residues. Positions 483 to 493 (RPKDGEARRLL) are enriched in basic and acidic residues. S501, S520, and S524 each carry phosphoserine. Residues 562-576 (HRTRAHPHTHARKQW) show a composition bias toward basic residues. S610 is subject to Phosphoserine. Position 691 is a phosphothreonine (T691). Phosphoserine occurs at positions 692 and 696.

As to quaternary structure, interacts with voltage-dependent calcium channels CACNB1, CACNB2, CACNB3 and CACNB4 beta subunits; prevents their interaction with the CACNA1C alpha subunit thereby negatively regulating the activity of the corresponding calcium channels. Expressed by neurons in the cortex, cerebellum and hippocampus and by pancreatic beta cells (at protein level).

Its subcellular location is the cytoplasmic vesicle. The protein localises to the secretory vesicle. It is found in the synaptic vesicle membrane. It localises to the cell membrane. The protein resides in the cell projection. Its subcellular location is the growth cone. Negatively regulates voltage-gated calcium channels by preventing the interaction between their alpha and beta subunits. Thereby, negatively regulates calcium channels activity at the plasma membrane and indirectly inhibits calcium-regulated exocytosis. This is Voltage-dependent calcium channel beta subunit-associated regulatory protein from Mus musculus (Mouse).